The primary structure comprises 371 residues: Anhydro-N-acetylmuramic acid kinase (371 aa).

An ATP-binding site is contributed by 12-20; sequence GTVLDGNID.

This sequence belongs to the anhydro-N-acetylmuramic acid kinase family.

It carries out the reaction 1,6-anhydro-N-acetyl-beta-muramate + ATP + H2O = N-acetyl-D-muramate 6-phosphate + ADP + H(+). The protein operates within amino-sugar metabolism; 1,6-anhydro-N-acetylmuramate degradation. It functions in the pathway cell wall biogenesis; peptidoglycan recycling. Functionally, catalyzes the specific phosphorylation of 1,6-anhydro-N-acetylmuramic acid (anhMurNAc) with the simultaneous cleavage of the 1,6-anhydro ring, generating MurNAc-6-P. Is required for the utilization of anhMurNAc either imported from the medium or derived from its own cell wall murein, and thus plays a role in cell wall recycling. This Mesorhizobium japonicum (strain LMG 29417 / CECT 9101 / MAFF 303099) (Mesorhizobium loti (strain MAFF 303099)) protein is Anhydro-N-acetylmuramic acid kinase.